The chain runs to 496 residues: UDP-N-acetylmuramoyl-L-alanyl-D-glutamate--2,6-diaminopimelate ligase (496 aa).

Residues Leu-29 and Ser-31 each contribute to the UDP-N-acetyl-alpha-D-muramoyl-L-alanyl-D-glutamate site. 118 to 124 provides a ligand contact to ATP; sequence GTNGKTT. UDP-N-acetyl-alpha-D-muramoyl-L-alanyl-D-glutamate-binding positions include Asn-159, 160-161, Ser-187, Gln-193, and Arg-195; that span reads TT. At Lys-227 the chain carries N6-carboxylysine. Residues Arg-392, 416–419, Gly-467, and Glu-471 contribute to the meso-2,6-diaminopimelate site; that span reads DNPR. The short motif at 416–419 is the Meso-diaminopimelate recognition motif element; that stretch reads DNPR.

Belongs to the MurCDEF family. MurE subfamily. It depends on Mg(2+) as a cofactor. Post-translationally, carboxylation is probably crucial for Mg(2+) binding and, consequently, for the gamma-phosphate positioning of ATP.

Its subcellular location is the cytoplasm. The catalysed reaction is UDP-N-acetyl-alpha-D-muramoyl-L-alanyl-D-glutamate + meso-2,6-diaminopimelate + ATP = UDP-N-acetyl-alpha-D-muramoyl-L-alanyl-gamma-D-glutamyl-meso-2,6-diaminopimelate + ADP + phosphate + H(+). The protein operates within cell wall biogenesis; peptidoglycan biosynthesis. Functionally, catalyzes the addition of meso-diaminopimelic acid to the nucleotide precursor UDP-N-acetylmuramoyl-L-alanyl-D-glutamate (UMAG) in the biosynthesis of bacterial cell-wall peptidoglycan. The protein is UDP-N-acetylmuramoyl-L-alanyl-D-glutamate--2,6-diaminopimelate ligase of Wigglesworthia glossinidia brevipalpis.